The primary structure comprises 60 residues: MNSLQVLTKKVLIENKAFSEYHEDDIFILQQLGLWWTQSPGILIKLQGRSGKRINIPERS.

The protein belongs to the asfivirus MGF 360 family.

Functionally, plays a role in virus cell tropism, and may be required for efficient virus replication in macrophages. The protein is Protein MGF 360-5L of Ornithodoros (relapsing fever ticks).